The chain runs to 139 residues: D-ribose pyranase (139 aa).

His20 (proton donor) is an active-site residue. Substrate contacts are provided by residues Asp28, His106, and 128-130; that span reads YAN.

It belongs to the RbsD / FucU family. RbsD subfamily. In terms of assembly, homodecamer.

The protein localises to the cytoplasm. The catalysed reaction is beta-D-ribopyranose = beta-D-ribofuranose. It functions in the pathway carbohydrate metabolism; D-ribose degradation; D-ribose 5-phosphate from beta-D-ribopyranose: step 1/2. Functionally, catalyzes the interconversion of beta-pyran and beta-furan forms of D-ribose. This chain is D-ribose pyranase, found in Pasteurella multocida (strain Pm70).